The chain runs to 135 residues: UPF0355 protein SACOL0457 (135 aa).

Belongs to the UPF0355 family.

The protein is UPF0355 protein SACOL0457 of Staphylococcus aureus (strain COL).